The primary structure comprises 227 residues: TMF-regulated nuclear protein 1 (227 aa).

Disordered stretches follow at residues M1–R72 and G200–R227. Residues S22–P55 are compositionally biased toward pro residues.

As to quaternary structure, interacts with TMF1; may regulate TRNP1 proteasomal degradation. In terms of processing, ubiquitinated, leading to its degradation by the proteasome.

The protein localises to the nucleus. Its function is as follows. DNA-binding factor that regulates the expression of a subset of genes and plays a key role in tangential, radial, and lateral expansion of the brain neocortex. Regulates neural stem cells proliferation and the production of intermediate neural progenitors and basal radial glial cells affecting the process of cerebral cortex gyrification. May control the proliferation rate of cells by regulating their progression through key cell-cycle transition points. In Homo sapiens (Human), this protein is TMF-regulated nuclear protein 1 (TRNP1).